Here is a 292-residue protein sequence, read N- to C-terminus: Phosphatidylglycerol--prolipoprotein diacylglyceryl transferase (292 aa).

Transmembrane regions (helical) follow at residues 25 to 45 (IALH…WWYA), 70 to 90 (FVVW…VLVW), 101 to 121 (AIIA…GIII), 138 to 158 (FDIV…CNFI), 193 to 213 (FMEG…FKAL), and 255 to 275 (GFTY…YLLL). Residue arginine 153 coordinates a 1,2-diacyl-sn-glycero-3-phospho-(1'-sn-glycerol).

The protein belongs to the Lgt family.

The protein localises to the cell inner membrane. The enzyme catalyses L-cysteinyl-[prolipoprotein] + a 1,2-diacyl-sn-glycero-3-phospho-(1'-sn-glycerol) = an S-1,2-diacyl-sn-glyceryl-L-cysteinyl-[prolipoprotein] + sn-glycerol 1-phosphate + H(+). It participates in protein modification; lipoprotein biosynthesis (diacylglyceryl transfer). Catalyzes the transfer of the diacylglyceryl group from phosphatidylglycerol to the sulfhydryl group of the N-terminal cysteine of a prolipoprotein, the first step in the formation of mature lipoproteins. This chain is Phosphatidylglycerol--prolipoprotein diacylglyceryl transferase, found in Bartonella quintana (strain Toulouse) (Rochalimaea quintana).